We begin with the raw amino-acid sequence, 702 residues long: Threonine--tRNA ligase (702 aa).

A disordered region spans residues 1 to 30; the sequence is MSAPVHPVPGADGGDPLRPATPGLRSPQVP. Residues 15–84 form the TGS domain; it reads DPLRPATPGL…DVDVEVTPVP (70 aa). A catalytic region spans residues 279–585; that stretch reads DHRKLGIELD…LTEHYAGAFP (307 aa). Zn(2+) is bound by residues C384, H435, and H562.

The protein belongs to the class-II aminoacyl-tRNA synthetase family. In terms of assembly, homodimer. Zn(2+) serves as cofactor.

It localises to the cytoplasm. The catalysed reaction is tRNA(Thr) + L-threonine + ATP = L-threonyl-tRNA(Thr) + AMP + diphosphate + H(+). Catalyzes the attachment of threonine to tRNA(Thr) in a two-step reaction: L-threonine is first activated by ATP to form Thr-AMP and then transferred to the acceptor end of tRNA(Thr). Also edits incorrectly charged L-seryl-tRNA(Thr). The polypeptide is Threonine--tRNA ligase (Mycobacterium leprae (strain Br4923)).